We begin with the raw amino-acid sequence, 140 residues long: C-type lectin 6 (140 aa).

The first 23 residues, 1–23 (MGRLVFVSFGLLVVFLSLSGTGA), serve as a signal peptide directing secretion. 3 cysteine pairs are disulfide-bonded: cysteine 25-cysteine 36, cysteine 53-cysteine 138, and cysteine 115-cysteine 130. Positions 32-139 (YEGHCYRVFQ…CSKTHNVICK (108 aa)) constitute a C-type lectin domain.

It belongs to the snaclec family. Heteromultimer; disulfide-linked. In terms of tissue distribution, expressed by the venom gland.

The protein localises to the secreted. In terms of biological role, interferes with one step of hemostasis (modulation of platelet aggregation, or coagulation cascade, for example). This chain is C-type lectin 6, found in Crotalus adamanteus (Eastern diamondback rattlesnake).